Reading from the N-terminus, the 1346-residue chain is Adhesion G protein-coupled receptor F5 (1346 aa).

The N-terminal stretch at 1 to 21 is a signal peptide; it reads MKSPRRTTLCLMFIVIYSSKA. Residues 22–1006 lie on the Extracellular side of the membrane; it reads ALNWNYESTI…MSPDSPDPSS (985 aa). Residues Asn73, Asn94, Asn106, Asn188, Asn256, Asn272, Asn301, Asn315, Asn328, Asn398, Asn472, Asn487, Asn505, Asn540, Asn627, Asn649, Asn666, Asn820, Asn931, Asn963, and Asn982 are each glycosylated (N-linked (GlcNAc...) asparagine). In terms of domain architecture, SEA spans 166-273; sequence LQEDVTLNMR…NSFQAVTINE (108 aa). 3 Ig-like domains span residues 267-368, 369-466, and 471-561; these read QAVT…IDVM, PIQI…IKVT, and ANLT…KDVI. 2 cysteine pairs are disulfide-bonded: Cys293–Cys350 and Cys391–Cys449. Cys492 and Cys545 are joined by a disulfide. One can recognise a GAIN-B domain in the interval 842-1003; it reads PPLSFSQTNV…SILMSPDSPD (162 aa). Disulfide bonds link Cys954–Cys985 and Cys973–Cys987. The tract at residues 954-1003 is GPS; that stretch reads CVFWNFRLANNTGGWDSSGCYVEEGDGDNVTCICDHLTSFSILMSPDSPD. A tethered agonist region spans residues 991–1006; the sequence is TSFSILMSPDSPDPSS. A helical membrane pass occupies residues 1007–1027; that stretch reads LLGILLDIISYVGVGFSILSL. Residues 1028–1053 are Cytoplasmic-facing; that stretch reads AACLVVEAVVWKSVTKNRTSYMRHTC. Residues 1054 to 1074 traverse the membrane as a helical segment; the sequence is IVNIAASLLVANTWFIVVAAI. Residues 1075–1090 are Extracellular-facing; that stretch reads QDNRYILCKTACVAAT. The chain crosses the membrane as a helical span at residues 1091-1111; that stretch reads FFIHFFYLSVFFWMLTLGLML. Residues 1112–1128 are Cytoplasmic-facing; sequence FYRLVFILHETSRSTQK. A helical transmembrane segment spans residues 1129 to 1149; the sequence is AIAFCLGYGCPLAISVITLGA. The Extracellular segment spans residues 1150-1173; the sequence is TQPREVYTRKNVCWLNWEDTKALL. The chain crosses the membrane as a helical span at residues 1174 to 1194; sequence AFAIPALIIVVVNITITIVVI. Residues 1195-1220 lie on the Cytoplasmic side of the membrane; that stretch reads TKILRPSIGDKPCKQEKSSLFQISKS. The helical transmembrane segment at 1221 to 1241 threads the bilayer; the sequence is IGVLTPLLGLTWGFGLTTVFP. The Extracellular portion of the chain corresponds to 1242–1244; the sequence is GTN. The helical transmembrane segment at 1245–1265 threads the bilayer; the sequence is LVFHIIFAILNVFQGLFILLF. The Cytoplasmic portion of the chain corresponds to 1266–1346; sequence GCLWDLKVQE…NSSSASSLLN (81 aa). Phosphothreonine is present on Thr1300. Ser1307 is subject to Phosphoserine. Residues 1327-1346 form a disordered region; it reads TPEATSSSLENSSSASSLLN. Residues 1329 to 1346 show a composition bias toward low complexity; it reads EATSSSLENSSSASSLLN.

It belongs to the G-protein coupled receptor 2 family. Adhesion G-protein coupled receptor (ADGR) subfamily. As to quaternary structure, homodimer; disulfide-linked. Heterodimer of 2 chains generated by proteolytic processing; the large extracellular N-terminal fragment and the membrane-bound C-terminal fragment predominantly remain associated and non-covalently linked. Fragment generates by the processing enzyme furin remains attached to the extracellular N-terminal fragment. Interacts (via N-terminal extracellular domain) with SFTPD. Post-translationally, highly glycosylated. In terms of processing, proteolytically cleaved at multiple sites: one in the GPS region of the GAIN-B domain (S1 site) and the other in the SEA domain (S2 site). The proteolytic cleavage at S1 site generates an extracellular subunit and a seven-transmembrane subunit. The proteolytic cleavage at S2 site generates a fragment that undergoes proteolytic cleavage by the processing enzyme furin. As to expression, expressed in lung endothelial cells and in alveolar type II (ATII) cells (at protein level). Expressed high levels in subcutaneous adipose tissue in lean individuals and at lower levels in visceral fat. Expression levels in subcutaneous adipose tissue drastically drop in obese individuals.

It localises to the cell membrane. With respect to regulation, as an adhesion G protein-coupled receptor (aGPCR) exhibits a large N-terminal extracellular domain containing highly conserved GPCR autoproteolysis-inducing (GAIN) domain. During synthesis, intracellular autoproteolytic processing of nascent chain within the GAIN domain generates a mature protein, consisting of an N-terminal fragment that is non-covalently linked to the C-terminal fragment. The mature protein is routed to the plasma membrane where the N- and C-terminal fragments remain associated, forming the holoreceptor. Dissociation of the aGPCR fragments stimulates G protein signaling through the action of the tethered-peptide agonist stalk that is occluded within the GAIN domain in the holoreceptor form. This dissociation might be induced by ligand binding, such as that of sFNDC4. Its function is as follows. Adhesion G protein-coupled receptor. In alveolar type II (ATII or AT2) cells, required for normal lung surfactant homeostasis. Modulation of both surfactant secretion and uptake by ATII cells is mediated by the downstream activation of GNAQ/GNA11 proteins and may be a consequence of increased cortical F-actin assembly induced by ADGRF5 activation. In the kidney, may play a role in the regulation of acid excretion into the primary urine, possibly by regulating the surface expression of V-ATPase proton pump. As a receptor for soluble FNDC4 (sFNDC4), required for proper systemic glucose tolerance, specifically sensitizing white adipose tissue to insulin. Also plays a role in sFNDC4-induced decrease of local inflammation in white adipose tissue. The chain is Adhesion G protein-coupled receptor F5 from Homo sapiens (Human).